A 154-amino-acid chain; its full sequence is Low molecular weight protein-tyrosine-phosphatase PtpA (154 aa).

Catalysis depends on Cys-8, which acts as the Nucleophile. Arg-14 is an active-site residue. Asp-120 (proton donor) is an active-site residue.

It belongs to the low molecular weight phosphotyrosine protein phosphatase family. As to quaternary structure, interacts with host CORO1A. Post-translationally, phosphorylations at Tyr-122 and Tyr-123 are essential for phosphatase activity.

It localises to the secreted. It catalyses the reaction O-phospho-L-tyrosyl-[protein] + H2O = L-tyrosyl-[protein] + phosphate. Secreted tyrosine phosphatase that plays a critical role during infection as a bacterial effector protein that counteracts host defenses. Required for intramacrophage survival. This Staphylococcus aureus (strain bovine RF122 / ET3-1) protein is Low molecular weight protein-tyrosine-phosphatase PtpA (ptpA).